Reading from the N-terminus, the 314-residue chain is Oxidoreductase NAD-binding domain-containing protein 1 (314 aa).

Positions 1-18 (MALVAGSAAYQVLRGVTG) are cleaved as a signal peptide. An FAD-binding FR-type domain is found at 63-166 (EIISPAKVCE…VGGEFCFDPQ (104 aa)). 180-185 (GVGINP) lines the NAD(+) pocket.

The chain is Oxidoreductase NAD-binding domain-containing protein 1 (oxnad1) from Xenopus tropicalis (Western clawed frog).